A 328-amino-acid polypeptide reads, in one-letter code: Arabinose 5-phosphate isomerase KdsD (328 aa).

Residues 42-184 (CEKMFWCKGK…AVALLKARGF (143 aa)) enclose the SIS domain. Substrate-binding positions include 75–76 (GT), histidine 82, histidine 88, 114–123 (ALIPVLKRLH), 148–150 (KVA), threonine 222, and aspartate 275. Histidine 82 provides a ligand contact to Zn(2+). The region spanning 210-268 (MHTGDEIPHVKKTASLRDALLEVTRKNLGMTVICDDNMMIEGIFTDGDLRRVFDMGVDV) is the CBS 1 domain. The 52-residue stretch at 277–328 (MTPGGIRVRPGILAVEALNLMQSRHITSVMVADGDHLLGVLHMHDLLRAGVV) folds into the CBS 2 domain.

It belongs to the SIS family. GutQ/KpsF subfamily. As to quaternary structure, homotetramer.

It catalyses the reaction D-arabinose 5-phosphate = D-ribulose 5-phosphate. Its pathway is carbohydrate biosynthesis; 3-deoxy-D-manno-octulosonate biosynthesis; 3-deoxy-D-manno-octulosonate from D-ribulose 5-phosphate: step 1/3. It participates in bacterial outer membrane biogenesis; lipopolysaccharide biosynthesis. Its function is as follows. Involved in the biosynthesis of 3-deoxy-D-manno-octulosonate (KDO), a unique 8-carbon sugar component of lipopolysaccharides (LPSs). Catalyzes the reversible aldol-ketol isomerization between D-ribulose 5-phosphate (Ru5P) and D-arabinose 5-phosphate (A5P). This Escherichia coli O6:H1 (strain CFT073 / ATCC 700928 / UPEC) protein is Arabinose 5-phosphate isomerase KdsD (kdsD).